The chain runs to 692 residues: Elongation factor G (692 aa).

Residues 8 to 282 enclose the tr-type G domain; that stretch reads EKVRNIGIAA…AVVDYLPAPT (275 aa). Residues 17–24, 81–85, and 135–138 contribute to the GTP site; these read AHIDAGKT, DTPGH, and NKMD.

This sequence belongs to the TRAFAC class translation factor GTPase superfamily. Classic translation factor GTPase family. EF-G/EF-2 subfamily.

Its subcellular location is the cytoplasm. Functionally, catalyzes the GTP-dependent ribosomal translocation step during translation elongation. During this step, the ribosome changes from the pre-translocational (PRE) to the post-translocational (POST) state as the newly formed A-site-bound peptidyl-tRNA and P-site-bound deacylated tRNA move to the P and E sites, respectively. Catalyzes the coordinated movement of the two tRNA molecules, the mRNA and conformational changes in the ribosome. The protein is Elongation factor G of Trichormus variabilis (strain ATCC 29413 / PCC 7937) (Anabaena variabilis).